We begin with the raw amino-acid sequence, 1292 residues long: ABC multidrug transporter MDR5 (1292 aa).

The disordered stretch occupies residues 1-43 (MTEEPKPVTPVLRDGEAGLDTTAPTEAGSLGEEAPKKEADGIV). The next 2 membrane-spanning stretches (helical) occupy residues 79-99 (ICGF…TIIF) and 128-148 (LWFV…TICF). Residues 81–370 (GFFAAVASGT…IAPTLGEFTK (290 aa)) enclose the ABC transmembrane type-1 1 domain. Residue asparagine 149 is glycosylated (N-linked (GlcNAc...) asparagine). 4 helical membrane-spanning segments follow: residues 202-222 (VGTC…AFTQ), 226-246 (LTLP…ITVA), 314-334 (EFFI…KLLL), and 344-364 (ILTV…IAPT). Positions 405-650 (LELSNAVFSY…KGQYWSLVNA (246 aa)) constitute an ABC transporter 1 domain. ATP is bound at residue 440–447 (GASGSGKS). Asparagine 494 carries N-linked (GlcNAc...) asparagine glycosylation. Residues 656-691 (ASDDSSSDTDKETDTQPAEILEKHATTKSTHSKVPH) form a disordered region. Residues 663-680 (DTDKETDTQPAEILEKHA) are compositionally biased toward basic and acidic residues. A run of 2 helical transmembrane segments spans residues 720-740 (HWLF…AFPA) and 768-788 (LMFF…GFFL). The 288-residue stretch at 725–1012 (LLGGIASVVS…IFGFTMNTTK (288 aa)) folds into the ABC transmembrane type-1 2 domain. N-linked (GlcNAc...) asparagine glycosylation occurs at asparagine 820. Transmembrane regions (helical) follow at residues 844–864 (IGLI…ALVT), 866–886 (WKLA…AGFI), 949–969 (IAMI…ALAF), and 986–1006 (FFVI…IFGF). Residues asparagine 1009, asparagine 1031, and asparagine 1052 are each glycosylated (N-linked (GlcNAc...) asparagine). One can recognise an ABC transporter 2 domain in the interval 1048 to 1285 (VEFRNVSFSY…KGRYFEMCKA (238 aa)). Position 1083-1090 (1083-1090 (GPSGCGKT)) interacts with ATP.

Belongs to the ABC transporter superfamily. ABCB family. Multidrug resistance exporter (TC 3.A.1.201) subfamily.

Its subcellular location is the cell membrane. The enzyme catalyses itraconazole(in) + ATP + H2O = itraconazole(out) + ADP + phosphate + H(+). In terms of biological role, pleiotropic ABC efflux transporter involved in the modulation susceptibility to itraconazole. This is ABC multidrug transporter MDR5 from Trichophyton rubrum (strain ATCC MYA-4607 / CBS 118892) (Athlete's foot fungus).